A 426-amino-acid polypeptide reads, in one-letter code: Putative competence-damage inducible protein (426 aa).

It belongs to the CinA family.

The polypeptide is Putative competence-damage inducible protein (Symbiobacterium thermophilum (strain DSM 24528 / JCM 14929 / IAM 14863 / T)).